A 364-amino-acid polypeptide reads, in one-letter code: tRNA 2-selenouridine synthase (364 aa).

The region spanning 14–137 (LIADTPIIDV…LRQTAIQATI (124 aa)) is the Rhodanese domain. The S-selanylcysteine intermediate role is filled by C97.

The protein belongs to the SelU family. Monomer.

It catalyses the reaction 5-methylaminomethyl-2-thiouridine(34) in tRNA + selenophosphate + (2E)-geranyl diphosphate + H2O + H(+) = 5-methylaminomethyl-2-selenouridine(34) in tRNA + (2E)-thiogeraniol + phosphate + diphosphate. The enzyme catalyses 5-methylaminomethyl-2-thiouridine(34) in tRNA + (2E)-geranyl diphosphate = 5-methylaminomethyl-S-(2E)-geranyl-thiouridine(34) in tRNA + diphosphate. The catalysed reaction is 5-methylaminomethyl-S-(2E)-geranyl-thiouridine(34) in tRNA + selenophosphate + H(+) = 5-methylaminomethyl-2-(Se-phospho)selenouridine(34) in tRNA + (2E)-thiogeraniol. It carries out the reaction 5-methylaminomethyl-2-(Se-phospho)selenouridine(34) in tRNA + H2O = 5-methylaminomethyl-2-selenouridine(34) in tRNA + phosphate. Functionally, involved in the post-transcriptional modification of the uridine at the wobble position (U34) of tRNA(Lys), tRNA(Glu) and tRNA(Gln). Catalyzes the conversion of 2-thiouridine (S2U-RNA) to 2-selenouridine (Se2U-RNA). Acts in a two-step process involving geranylation of 2-thiouridine (S2U) to S-geranyl-2-thiouridine (geS2U) and subsequent selenation of the latter derivative to 2-selenouridine (Se2U) in the tRNA chain. In Shigella dysenteriae serotype 1 (strain Sd197), this protein is tRNA 2-selenouridine synthase.